The sequence spans 258 residues: Hydroxyacylglutathione hydrolase (258 aa).

7 residues coordinate Zn(2+): H54, H56, D58, H59, H113, D138, and H176.

The protein belongs to the metallo-beta-lactamase superfamily. Glyoxalase II family. Monomer. Zn(2+) serves as cofactor.

The catalysed reaction is an S-(2-hydroxyacyl)glutathione + H2O = a 2-hydroxy carboxylate + glutathione + H(+). The protein operates within secondary metabolite metabolism; methylglyoxal degradation; (R)-lactate from methylglyoxal: step 2/2. Thiolesterase that catalyzes the hydrolysis of S-D-lactoyl-glutathione to form glutathione and D-lactic acid. The sequence is that of Hydroxyacylglutathione hydrolase from Synechococcus sp. (strain ATCC 27144 / PCC 6301 / SAUG 1402/1) (Anacystis nidulans).